We begin with the raw amino-acid sequence, 181 residues long: MTLVAGLGNIGKEYENTRHNVGFMLIDTMLKDGGFNSVSSGKFQGELFKKGSLLLLKPSTFMNLSGNSLKAVNDFYKPDNIIVIHDDLDLPFGTVRFKRGGSSGGHNGIKSIDNLIGNDYDRVRIGIGRGNNSVISYVLGEFIDDEKDRLKDVLAHCKNAVLELISCGDITQISSKFTLKA.

Residue Tyr14 participates in tRNA binding. His19 serves as the catalytic Proton acceptor. The tRNA site is built by Phe61, Asn63, and Asn107.

Belongs to the PTH family. Monomer.

It is found in the cytoplasm. It carries out the reaction an N-acyl-L-alpha-aminoacyl-tRNA + H2O = an N-acyl-L-amino acid + a tRNA + H(+). In terms of biological role, hydrolyzes ribosome-free peptidyl-tRNAs (with 1 or more amino acids incorporated), which drop off the ribosome during protein synthesis, or as a result of ribosome stalling. Its function is as follows. Catalyzes the release of premature peptidyl moieties from peptidyl-tRNA molecules trapped in stalled 50S ribosomal subunits, and thus maintains levels of free tRNAs and 50S ribosomes. This Campylobacter fetus subsp. fetus (strain 82-40) protein is Peptidyl-tRNA hydrolase.